Here is a 338-residue protein sequence, read N- to C-terminus: DNA-directed RNA polymerase subunit alpha (338 aa).

Residues 1–234 (MIERNWNELI…DQLQIFITFE (234 aa)) form an alpha N-terminal domain (alpha-NTD) region. An alpha C-terminal domain (alpha-CTD) region spans residues 250-338 (FNPALLKKVD…DLAKKFEDQI (89 aa)).

This sequence belongs to the RNA polymerase alpha chain family. As to quaternary structure, homodimer. The RNAP catalytic core consists of 2 alpha, 1 beta, 1 beta' and 1 omega subunit. When a sigma factor is associated with the core the holoenzyme is formed, which can initiate transcription.

It catalyses the reaction RNA(n) + a ribonucleoside 5'-triphosphate = RNA(n+1) + diphosphate. In terms of biological role, DNA-dependent RNA polymerase catalyzes the transcription of DNA into RNA using the four ribonucleoside triphosphates as substrates. The protein is DNA-directed RNA polymerase subunit alpha of Caulobacter vibrioides (strain ATCC 19089 / CIP 103742 / CB 15) (Caulobacter crescentus).